The sequence spans 446 residues: Maltoporin (446 aa).

Positions 1–25 are cleaved as a signal peptide; sequence MMITLRKLPLAVAVAAGVMSAQAMA.

Belongs to the porin LamB (TC 1.B.3) family. As to quaternary structure, homotrimer formed of three 18-stranded antiparallel beta-barrels, containing three independent channels.

The protein localises to the cell outer membrane. It carries out the reaction beta-maltose(in) = beta-maltose(out). In terms of biological role, involved in the transport of maltose and maltodextrins. This Escherichia coli O127:H6 (strain E2348/69 / EPEC) protein is Maltoporin.